A 332-amino-acid polypeptide reads, in one-letter code: UPF0194 membrane protein YbhG (332 aa).

A signal peptide spans 1–16 (MMKKPVVIGLAVVVLA). Positions 141-210 (RTISANDLEN…NLQDSTLIAP (70 aa)) form a coiled coil.

It belongs to the UPF0194 family.

Its subcellular location is the periplasm. The chain is UPF0194 membrane protein YbhG (ybhG) from Shigella flexneri.